Reading from the N-terminus, the 147-residue chain is Hemoglobin subunit beta (147 aa).

Val2 carries the N-acetylvaline modification. The region spanning His3 to His147 is the Globin domain. Thr13 carries the post-translational modification Phosphothreonine. Phosphoserine is present on Ser45. Position 60 is an N6-acetyllysine (Lys60). Residue His64 participates in heme b binding. Residue Lys83 is modified to N6-acetyllysine. Position 93 (His93) interacts with heme b. Cys94 carries the post-translational modification S-nitrosocysteine. Residue Lys145 is modified to N6-acetyllysine.

Belongs to the globin family. As to quaternary structure, heterotetramer of two alpha chains and two beta chains. As to expression, red blood cells.

Functionally, involved in oxygen transport from the lung to the various peripheral tissues. The polypeptide is Hemoglobin subunit beta (HBB) (Colobus polykomos (Western black-and-white colobus monkey)).